The chain runs to 497 residues: MAYLLALDQGTSSSRSIVFDEEGRVVALAQRELPQIYPRPGWVEHDPMEIWRGQLATARQALASVGLAAWDIRAMGITNQRETTVLWNRRTGQPVHHAIVWQDRRAESTCAQLREQGHEALIQAKTGLLIDAYFSGTKLKWLLDNVAGVRAQAERGELAFGTIDSWLIWQLTGGTVHATDVSNASRTMLFNVRTNQWDAELLDLLGIPASLMPEVKPSSAHYGEVRPELLGHAIPIGGVAGDQQSALFGQACFRAGMAKNTYGTGCFLLMHTGAQFQASKNGLLTTSAAQTTAQTEFALEGSVFVGGAVVQWLRDGLHAIQGSAEVEALAQSVPDSGGVMMVPAFTGLGAPYWKPEARGTITGLTRGTTMAHIARAALESIAYQSAALLLAMSRDAVAAGAAPLAELRVDGGASSNDLLMQFQADLLGIPVIRPAVTETTALGAAWLAGLSSGVYGSTDELSSLWRAERTFLPTLSTGRAAELMAQWEHAVRQTVLA.

Residue Thr11 participates in ADP binding. Thr11, Ser12, and Ser13 together coordinate ATP. Residue Thr11 coordinates sn-glycerol 3-phosphate. Arg15 lines the ADP pocket. Residues Arg81, Glu82, Tyr133, and Asp242 each contribute to the sn-glycerol 3-phosphate site. 5 residues coordinate glycerol: Arg81, Glu82, Tyr133, Asp242, and Gln243. Positions 264 and 307 each coordinate ADP. Residues Thr264, Gly307, Gln311, and Gly412 each contribute to the ATP site. Residues Gly412 and Asn416 each coordinate ADP.

Belongs to the FGGY kinase family.

The enzyme catalyses glycerol + ATP = sn-glycerol 3-phosphate + ADP + H(+). The protein operates within polyol metabolism; glycerol degradation via glycerol kinase pathway; sn-glycerol 3-phosphate from glycerol: step 1/1. Inhibited by fructose 1,6-bisphosphate (FBP). Key enzyme in the regulation of glycerol uptake and metabolism. Catalyzes the phosphorylation of glycerol to yield sn-glycerol 3-phosphate. The protein is Glycerol kinase of Polaromonas naphthalenivorans (strain CJ2).